The chain runs to 185 residues: Protein OPG161 (185 aa).

Over 1 to 33 the chain is Intravirion; sequence MMTPENDEEQTSVFSATVYGDKIQGKNKRKRVI. A helical membrane pass occupies residues 34 to 56; the sequence is GLCIRISMVISLLSMITMSAFLI. The Virion surface segment spans residues 57 to 185; that stretch reads VRLNQCMSAN…RKYFCVKTMN (129 aa). The segment at 98–185 is C-type lectin-like domain; that stretch reads ESCNGLYYQG…RKYFCVKTMN (88 aa). Asparagine 125 and asparagine 135 each carry an N-linked (GlcNAc...) asparagine; by host glycan.

This sequence belongs to the orthopoxvirus OPG161 family. Homodimer, disulfide-linked. Interacts with protein OPG190. Interacts (via C-terminus) with protein OPG164. Interacts with OPG162.

The protein localises to the virion membrane. It is found in the host membrane. Its function is as follows. Forms a complex with OPG162 and OPG190 to coordinate the incorporation of OPG164 into wrapped enveloped virion (EV) membranes and, subsequently, the production of actin tails. Therefore plays an essential role in efficient cell-to-cell spread of viral particles. The chain is Protein OPG161 (OPG161) from Homo sapiens (Human).